A 113-amino-acid chain; its full sequence is Integration host factor subunit alpha (113 aa).

A disordered region spans residues 59-80 (GNFQVRDKPPRPGRNPKTGETI).

The protein belongs to the bacterial histone-like protein family. As to quaternary structure, heterodimer of an alpha and a beta chain.

Its function is as follows. This protein is one of the two subunits of integration host factor, a specific DNA-binding protein that functions in genetic recombination as well as in transcriptional and translational control. The chain is Integration host factor subunit alpha from Bordetella bronchiseptica (strain ATCC BAA-588 / NCTC 13252 / RB50) (Alcaligenes bronchisepticus).